An 86-amino-acid polypeptide reads, in one-letter code: Large ribosomal subunit protein bL27 (86 aa).

The segment covering 1-11 has biased composition (gly residues); the sequence is MATKKAGGGSR. The disordered stretch occupies residues 1–24; it reads MATKKAGGGSRNGRDSAGRRLGVK.

The protein belongs to the bacterial ribosomal protein bL27 family.

The protein is Large ribosomal subunit protein bL27 of Rickettsia africae (strain ESF-5).